The chain runs to 622 residues: Chromosomal replication initiator protein DnaA (622 aa).

The tract at residues 1-99 (MADVPADLAA…SAGEPPAPPA (99 aa)) is domain I, interacts with DnaA modulators. The segment at 88 to 282 (DDSAGEPPAP…APGPGEPHAR (195 aa)) is disordered. The tract at residues 100 to 281 (PPMHQSHQGP…PAPGPGEPHA (182 aa)) is domain II. 2 stretches are compositionally biased toward basic and acidic residues: residues 118 to 137 (QRDD…RPSD) and 176 to 210 (GYQD…EPWR). Residues 250–262 (PGGHGPGRTGGSV) are compositionally biased toward gly residues. Positions 282-498 (RLNPKYLFDT…GALIRVTAFA (217 aa)) are domain III, AAA+ region. ATP is bound by residues Gly326, Gly328, Lys329, and Thr330. The domain IV, binds dsDNA stretch occupies residues 499–622 (SLNRQPVDLG…TELTNRIKNG (124 aa)).

The protein belongs to the DnaA family. Oligomerizes as a right-handed, spiral filament on DNA at oriC.

The protein localises to the cytoplasm. Plays an essential role in the initiation and regulation of chromosomal replication. ATP-DnaA binds to the origin of replication (oriC) to initiate formation of the DNA replication initiation complex once per cell cycle. Binds the DnaA box (a 9 base pair repeat at the origin) and separates the double-stranded (ds)DNA. Forms a right-handed helical filament on oriC DNA; dsDNA binds to the exterior of the filament while single-stranded (ss)DNA is stabiized in the filament's interior. The ATP-DnaA-oriC complex binds and stabilizes one strand of the AT-rich DNA unwinding element (DUE), permitting loading of DNA polymerase. After initiation quickly degrades to an ADP-DnaA complex that is not apt for DNA replication. Binds acidic phospholipids. The protein is Chromosomal replication initiator protein DnaA of Streptomyces griseus subsp. griseus (strain JCM 4626 / CBS 651.72 / NBRC 13350 / KCC S-0626 / ISP 5235).